Reading from the N-terminus, the 332-residue chain is BRISC and BRCA1-A complex member 1 (332 aa).

Met-1 is subject to N-acetylmethionine. Positions 1-88 are disordered; sequence MEVAEPSCPT…PPPAPEVQVR (88 aa). Acidic residues predominate over residues 10 to 23; the sequence is TEEEEEEEEEEEQS. Ser-32, Ser-52, and Ser-60 each carry phosphoserine. Residues 70 to 83 are compositionally biased toward pro residues; it reads GAGPKPWQVPPPAP. The tract at residues 98 to 301 is VWFA-like; that stretch reads VIICLDLSEE…LELHNCMAKL (204 aa).

It belongs to the BABAM1 family. As to quaternary structure, component of the ARISC complex, at least composed of UIMC1/RAP80, ABRAXAS1, BRCC3/BRCC36, BABAM2 and BABAM1/NBA1. Component of the BRCA1-A complex, at least composed of BRCA1, BARD1, UIMC1/RAP80, ABRAXAS1, BRCC3/BRCC36, BABAM2 and BABAM1/NBA1. In the BRCA1-A complex, interacts directly with ABRAXAS1 and BABAM2. Component of the BRISC complex, at least composed of ABRAXAS2, BRCC3/BRCC36, BABAM2 and BABAM1/NBA1. Identified in a complex with SHMT2 and the other subunits of the BRISC complex.

The protein resides in the cytoplasm. The protein localises to the nucleus. Its function is as follows. Component of the BRCA1-A complex, a complex that specifically recognizes 'Lys-63'-linked ubiquitinated histones H2A and H2AX at DNA lesions sites, leading to target the BRCA1-BARD1 heterodimer to sites of DNA damage at double-strand breaks (DSBs). The BRCA1-A complex also possesses deubiquitinase activity that specifically removes 'Lys-63'-linked ubiquitin on histones H2A and H2AX. In the BRCA1-A complex, it is required for the complex integrity and its localization at DSBs. Component of the BRISC complex, a multiprotein complex that specifically cleaves 'Lys-63'-linked ubiquitin in various substrates. In these 2 complexes, it is probably required to maintain the stability of BABAM2 and help the 'Lys-63'-linked deubiquitinase activity mediated by BRCC3/BRCC36 component. The BRISC complex is required for normal mitotic spindle assembly and microtubule attachment to kinetochores via its role in deubiquitinating NUMA1. Plays a role in interferon signaling via its role in the deubiquitination of the interferon receptor IFNAR1; deubiquitination increases IFNAR1 activity by enhancing its stability and cell surface expression. Down-regulates the response to bacterial lipopolysaccharide (LPS) via its role in IFNAR1 deubiquitination. This chain is BRISC and BRCA1-A complex member 1 (BABAM1), found in Bos taurus (Bovine).